Reading from the N-terminus, the 475-residue chain is Aspartyl/glutamyl-tRNA(Asn/Gln) amidotransferase subunit B (475 aa).

Belongs to the GatB/GatE family. GatB subfamily. In terms of assembly, heterotrimer of A, B and C subunits.

It catalyses the reaction L-glutamyl-tRNA(Gln) + L-glutamine + ATP + H2O = L-glutaminyl-tRNA(Gln) + L-glutamate + ADP + phosphate + H(+). The catalysed reaction is L-aspartyl-tRNA(Asn) + L-glutamine + ATP + H2O = L-asparaginyl-tRNA(Asn) + L-glutamate + ADP + phosphate + 2 H(+). Functionally, allows the formation of correctly charged Asn-tRNA(Asn) or Gln-tRNA(Gln) through the transamidation of misacylated Asp-tRNA(Asn) or Glu-tRNA(Gln) in organisms which lack either or both of asparaginyl-tRNA or glutaminyl-tRNA synthetases. The reaction takes place in the presence of glutamine and ATP through an activated phospho-Asp-tRNA(Asn) or phospho-Glu-tRNA(Gln). The polypeptide is Aspartyl/glutamyl-tRNA(Asn/Gln) amidotransferase subunit B (Staphylococcus saprophyticus subsp. saprophyticus (strain ATCC 15305 / DSM 20229 / NCIMB 8711 / NCTC 7292 / S-41)).